We begin with the raw amino-acid sequence, 658 residues long: Probable rhamnogalacturonate lyase B (658 aa).

The N-terminal stretch at 1-19 (MRFAIPLGAACAWAGVALA) is a signal peptide. Residues asparagine 110, asparagine 143, asparagine 239, asparagine 280, asparagine 522, asparagine 530, asparagine 592, and asparagine 633 are each glycosylated (N-linked (GlcNAc...) asparagine).

It belongs to the polysaccharide lyase 4 family.

The protein localises to the secreted. It carries out the reaction Endotype eliminative cleavage of L-alpha-rhamnopyranosyl-(1-&gt;4)-alpha-D-galactopyranosyluronic acid bonds of rhamnogalacturonan I domains in ramified hairy regions of pectin leaving L-rhamnopyranose at the reducing end and 4-deoxy-4,5-unsaturated D-galactopyranosyluronic acid at the non-reducing end.. Pectinolytic enzymes consist of four classes of enzymes: pectin lyase, polygalacturonase, pectin methylesterase and rhamnogalacturonase. Degrades the rhamnogalacturonan I (RG-I) backbone of pectin. The sequence is that of Probable rhamnogalacturonate lyase B (rglB) from Aspergillus fumigatus (strain CBS 144.89 / FGSC A1163 / CEA10) (Neosartorya fumigata).